Reading from the N-terminus, the 161-residue chain is Nucleotide-binding protein Mmc1_1670 (161 aa).

This sequence belongs to the YajQ family.

Nucleotide-binding protein. This is Nucleotide-binding protein Mmc1_1670 from Magnetococcus marinus (strain ATCC BAA-1437 / JCM 17883 / MC-1).